We begin with the raw amino-acid sequence, 347 residues long: sn-glycerol-3-phosphate import ATP-binding protein UgpC 1 (347 aa).

Residues Ile-4–Ile-234 form the ABC transporter domain. An ATP-binding site is contributed by Gly-36–Ser-43.

The protein belongs to the ABC transporter superfamily. sn-glycerol-3-phosphate importer (TC 3.A.1.1.3) family. In terms of assembly, the complex is composed of two ATP-binding proteins (UgpC), two transmembrane proteins (UgpA and UgpE) and a solute-binding protein (UgpB).

It localises to the cell inner membrane. The enzyme catalyses sn-glycerol 3-phosphate(out) + ATP + H2O = sn-glycerol 3-phosphate(in) + ADP + phosphate + H(+). Functionally, part of the ABC transporter complex UgpBAEC involved in sn-glycerol-3-phosphate (G3P) import. Responsible for energy coupling to the transport system. The protein is sn-glycerol-3-phosphate import ATP-binding protein UgpC 1 of Rhizobium etli (strain ATCC 51251 / DSM 11541 / JCM 21823 / NBRC 15573 / CFN 42).